The following is a 30-amino-acid chain: Glutathione S-transferase (30 aa).

Belongs to the GST superfamily. As to quaternary structure, monomer and homodimer.

The protein localises to the cytoplasm. The catalysed reaction is RX + glutathione = an S-substituted glutathione + a halide anion + H(+). Its function is as follows. Conjugation of reduced glutathione to a wide number of exogenous and endogenous hydrophobic electrophiles. In Pseudomonas fluorescens, this protein is Glutathione S-transferase.